We begin with the raw amino-acid sequence, 179 residues long: Large ribosomal subunit protein uL5 (179 aa).

The protein belongs to the universal ribosomal protein uL5 family. Part of the 50S ribosomal subunit; part of the 5S rRNA/L5/L18/L25 subcomplex. Contacts the 5S rRNA and the P site tRNA. Forms a bridge to the 30S subunit in the 70S ribosome.

Functionally, this is one of the proteins that bind and probably mediate the attachment of the 5S RNA into the large ribosomal subunit, where it forms part of the central protuberance. In the 70S ribosome it contacts protein S13 of the 30S subunit (bridge B1b), connecting the 2 subunits; this bridge is implicated in subunit movement. Contacts the P site tRNA; the 5S rRNA and some of its associated proteins might help stabilize positioning of ribosome-bound tRNAs. In Shewanella frigidimarina (strain NCIMB 400), this protein is Large ribosomal subunit protein uL5.